We begin with the raw amino-acid sequence, 100 residues long: Urease subunit gamma (100 aa).

Belongs to the urease gamma subunit family. As to quaternary structure, heterotrimer of UreA (gamma), UreB (beta) and UreC (alpha) subunits. Three heterotrimers associate to form the active enzyme.

Its subcellular location is the cytoplasm. The catalysed reaction is urea + 2 H2O + H(+) = hydrogencarbonate + 2 NH4(+). The protein operates within nitrogen metabolism; urea degradation; CO(2) and NH(3) from urea (urease route): step 1/1. This chain is Urease subunit gamma, found in Ruegeria pomeroyi (strain ATCC 700808 / DSM 15171 / DSS-3) (Silicibacter pomeroyi).